A 230-amino-acid chain; its full sequence is MADS-box transcription factor 50 (230 aa).

In terms of domain architecture, MADS-box spans 1 to 61 (MVRGKTQMKR…GKLYEFASAS (61 aa)). In terms of domain architecture, K-box spans 86-176 (IEQVKADADG…REKCKNQPPL (91 aa)). A disordered region spans residues 209–230 (GLPGRSRSSGGAAEDSQAMPHS).

In terms of tissue distribution, expressed in mature leaves and at low levels in roots and young panicles.

The protein resides in the nucleus. In terms of biological role, probable transcription factor active in flowering time control. May control internode elongation and promote floral transition phase. May act upstream of the floral regulators MADS1, MADS14, MADS15 and MADS18 in the floral induction pathway. This is MADS-box transcription factor 50 (MADS50) from Oryza sativa subsp. japonica (Rice).